Reading from the N-terminus, the 122-residue chain is Small ribosomal subunit protein bS16 (122 aa).

This sequence belongs to the bacterial ribosomal protein bS16 family.

The polypeptide is Small ribosomal subunit protein bS16 (Prochlorococcus marinus (strain MIT 9313)).